The following is a 300-amino-acid chain: F-box protein SKIP1 (300 aa).

The 42-residue stretch at 11–52 (LAPEILINIISRLTIQELWTGPMFVQKSWLTVCRDPYLWSIF) folds into the F-box; degenerate domain.

Part of a SCF (ASK-cullin-F-box) protein ligase complex. Interacts with SKP1A/ASK1 and SKP1B/ASK2.

The protein resides in the nucleus. It functions in the pathway protein modification; protein ubiquitination. Component of SCF(ASK-cullin-F-box) E3 ubiquitin ligase complexes, which may mediate the ubiquitination and subsequent proteasomal degradation of target proteins. The sequence is that of F-box protein SKIP1 (SKIP1) from Arabidopsis thaliana (Mouse-ear cress).